The sequence spans 734 residues: Diacylglycerol kinase alpha (734 aa).

EF-hand domains lie at 109-144 and 154-189; these read RPED…MMRM and ELRP…TVPL. Positions 122, 124, 126, 133, 167, 169, 171, 173, and 178 each coordinate Ca(2+). 2 consecutive Phorbol-ester/DAG-type zinc fingers follow at residues 204–252 and 268–318; these read QHMW…ALPC and THVW…GHEC. Positions 358-505 are necessary and sufficient for the diacylglycerol kinase activity; that stretch reads NLSTSEALRI…MDRWSVEVIP (148 aa). Residues 371–505 form the DAGKc domain; it reads SNTHPLLVFV…MDRWSVEVIP (135 aa). K483 is modified (N6-acetyllysine).

It belongs to the eukaryotic diacylglycerol kinase family. In terms of assembly, monomer.

The protein localises to the cytoplasm. Its subcellular location is the cytosol. It catalyses the reaction a 1,2-diacyl-sn-glycerol + ATP = a 1,2-diacyl-sn-glycero-3-phosphate + ADP + H(+). The catalysed reaction is a 1-O-alkyl-sn-glycerol + ATP = a 1-O-alkyl-sn-glycero-3-phosphate + ADP + H(+). It carries out the reaction 1-O-alkyl-2-acyl-sn-glycerol + ATP = 1-O-alkyl-2-acyl-sn-glycero-3-phosphate + ADP + H(+). The enzyme catalyses 1,2-dihexadecanoyl-sn-glycerol + ATP = 1,2-dihexadecanoyl-sn-glycero-3-phosphate + ADP + H(+). It catalyses the reaction 1-hexadecanoyl-2-(9Z-octadecenoyl)-sn-glycerol + ATP = 1-hexadecanoyl-2-(9Z-octadecenoyl)-sn-glycero-3-phosphate + ADP + H(+). The catalysed reaction is 2-(9Z-octadecenoyl)-glycerol + ATP = 2-(9Z-octadecenoyl)-sn-glycero-3-phosphate + ADP + H(+). It carries out the reaction 1,2-di-(9Z-octadecenoyl)-sn-glycerol + ATP = 1,2-di-(9Z-octadecenoyl)-sn-glycero-3-phosphate + ADP + H(+). The enzyme catalyses 1-octadecanoyl-2-(5Z,8Z,11Z,14Z-eicosatetraenoyl)-sn-glycerol + ATP = 1-octadecanoyl-2-(5Z,8Z,11Z,14Z-eicosatetraenoyl)-sn-glycero-3-phosphate + ADP + H(+). It catalyses the reaction 1,2-didecanoyl-sn-glycerol + ATP = 1,2-didecanoyl-sn-glycero-3-phosphate + ADP + H(+). The catalysed reaction is 1-O-hexadecyl-2-acetyl-sn-glycerol + ATP = 1-O-hexadecyl-2-acetyl-sn-glycero-3-phosphate + ADP + H(+). It carries out the reaction 1-O-hexadecyl-2-(5Z,8Z,11Z,14Z-eicosatetraenoyl)-sn-glycerol + ATP = 1-O-hexadecyl-2-(5Z,8Z,11Z,14Z-eicosatetraenoyl)-sn-glycero-3-phosphate + ADP + H(+). The enzyme catalyses 1-O-hexadecyl-2-(9Z-octadecenoyl)-sn-glycerol + ATP = 1-O-hexadecyl-2-(9Z-octadecenoyl)-sn-glycero-3-phosphate + ADP + H(+). It catalyses the reaction 1-O-hexadecyl-sn-glycerol + ATP = 1-O-hexadecyl-sn-glycero-3-phosphate + ADP + H(+). The protein operates within lipid metabolism; glycerolipid metabolism. Its activity is regulated as follows. Stimulated by calcium and phosphatidylserine. Diacylglycerol kinase that converts diacylglycerol/DAG into phosphatidic acid/phosphatidate/PA and regulates the respective levels of these two bioactive lipids. Thereby, acts as a central switch between the signaling pathways activated by these second messengers with different cellular targets and opposite effects in numerous biological processes. Also plays an important role in the biosynthesis of complex lipids. Can also phosphorylate 1-alkyl-2-acylglycerol in vitro as efficiently as diacylglycerol provided it contains an arachidonoyl group. Also involved in the production of alkyl-lysophosphatidic acid, another bioactive lipid, through the phosphorylation of 1-alkyl-2-acetyl glycerol. This is Diacylglycerol kinase alpha (DGKA) from Sus scrofa (Pig).